Consider the following 90-residue polypeptide: Translation initiation factor IF-1 2 (90 aa).

The S1-like domain maps to 1-72 (MAKEELLELD…TKGRINFRHK (72 aa)).

Belongs to the IF-1 family. Component of the 30S ribosomal translation pre-initiation complex which assembles on the 30S ribosome in the order IF-2 and IF-3, IF-1 and N-formylmethionyl-tRNA(fMet); mRNA recruitment can occur at any time during PIC assembly.

The protein resides in the cytoplasm. In terms of biological role, one of the essential components for the initiation of protein synthesis. Stabilizes the binding of IF-2 and IF-3 on the 30S subunit to which N-formylmethionyl-tRNA(fMet) subsequently binds. Helps modulate mRNA selection, yielding the 30S pre-initiation complex (PIC). Upon addition of the 50S ribosomal subunit IF-1, IF-2 and IF-3 are released leaving the mature 70S translation initiation complex. This chain is Translation initiation factor IF-1 2, found in Paraburkholderia xenovorans (strain LB400).